The primary structure comprises 494 residues: MTDLTMLTIAQARDSLKKGDFKATELTEAYLQAIELANPILNAYVAVTAEQAMRMAAESDNRLAKGEAGILEGIPLGIKDLFATYDVHTQGCSYILDGFKPKYESTVTANLWKDGAVMLGKLNMDEFAMGSSNETSYYGPVINPWRKKGSDEKLVPGGSSGGSSAAVAARLCVGATATDTGGSIRQPAAFTGTVGIKPTYGRCSRWGTIAYASSLDQAGPIGRDVRDCAIMLRSMASFDRKDSTSVDLPIPDYEKCIGQSIKGMKIGIPKEYRLEWMSTEVIELWQKGMDFLKEAGAEIVDISLPHVKYALPSYYIVASAEASSNLARYDGVRFGLRMPGKDIVEMYEKTRSAGFGDEVKQRILIGTYVLSSGYYDAYYIKAQKVRTLIKNDFDQCFAIGVDAILTPVTPTPAFGLADEKIKNDSIAMYLNDIFTVPVNMVGLPGVSVPAGLSSSGLPLGLQLIGKPFAEEVILQIAYIIEQAAGTFSAKKWWP.

Residues Lys79 and Ser159 each act as charge relay system in the active site. Ser183 acts as the Acyl-ester intermediate in catalysis.

The protein belongs to the amidase family. GatA subfamily. Heterotrimer of A, B and C subunits.

It catalyses the reaction L-glutamyl-tRNA(Gln) + L-glutamine + ATP + H2O = L-glutaminyl-tRNA(Gln) + L-glutamate + ADP + phosphate + H(+). Functionally, allows the formation of correctly charged Gln-tRNA(Gln) through the transamidation of misacylated Glu-tRNA(Gln) in organisms which lack glutaminyl-tRNA synthetase. The reaction takes place in the presence of glutamine and ATP through an activated gamma-phospho-Glu-tRNA(Gln). This Bartonella bacilliformis (strain ATCC 35685 / KC583 / Herrer 020/F12,63) protein is Glutamyl-tRNA(Gln) amidotransferase subunit A.